The primary structure comprises 368 residues: uncharacterized protein (368 aa).

Belongs to the Gfo/Idh/MocA family.

This is an uncharacterized protein from Schizosaccharomyces pombe (strain 972 / ATCC 24843) (Fission yeast).